We begin with the raw amino-acid sequence, 460 residues long: MNPVKNQVPKVGFVSLGCPKALVDSERILTQLRVEGYDIVPSYDAADVVVVNTCGFIDSAVTESLDAIGEAMNANGKVIVTGCLGKRPEQIREAYPQVLAVSGPQDYQSVMEAVHAALPPRHDPFVDLVPDYGIKLTPRHYAYLKISEGCNHRCSFCIIPSMRGDLVSRPVDEVLCEAERLVRGGVKELLVVSQDTSAYGVDLKYAERPWRDRMYQTRMKALCEGLSELGVWTRLHYVYPYPHVDDVLPLMAEGKLLPYLDIPFQHASPRILKLMKRPGAVEKTLQRVQRWKAMCPEITVRSTFIVGFPGETDAEFESLLDFLDQAQLDRVGAFAYSPVDGASANALPDPVPEEVKQERLARFMAKQAEISALRLEAKIGSVQQCLVDLIEDDIAVARSRADAPEIDGLVHIQNGGELGLKVGDLVDVEITDSDEHDLFGDALPANVVPQQGRALNLQMV.

In terms of domain architecture, MTTase N-terminal spans 9 to 119 (PKVGFVSLGC…VMEAVHAALP (111 aa)). [4Fe-4S] cluster-binding residues include Cys18, Cys54, Cys83, Cys150, Cys154, and Cys157. The 239-residue stretch at 136–374 (LTPRHYAYLK…AKQAEISALR (239 aa)) folds into the Radical SAM core domain. The 69-residue stretch at 376-444 (EAKIGSVQQC…EHDLFGDALP (69 aa)) folds into the TRAM domain.

The protein belongs to the methylthiotransferase family. RimO subfamily. Requires [4Fe-4S] cluster as cofactor.

The protein resides in the cytoplasm. The catalysed reaction is L-aspartate(89)-[ribosomal protein uS12]-hydrogen + (sulfur carrier)-SH + AH2 + 2 S-adenosyl-L-methionine = 3-methylsulfanyl-L-aspartate(89)-[ribosomal protein uS12]-hydrogen + (sulfur carrier)-H + 5'-deoxyadenosine + L-methionine + A + S-adenosyl-L-homocysteine + 2 H(+). In terms of biological role, catalyzes the methylthiolation of an aspartic acid residue of ribosomal protein uS12. The sequence is that of Ribosomal protein uS12 methylthiotransferase RimO from Xanthomonas oryzae pv. oryzae (strain PXO99A).